The chain runs to 536 residues: Multicopper oxidase CueO (536 aa).

The tat-type signal signal peptide spans 1-28; it reads MLRRDFLKYSVALGVASALPLWSRAAFA. Plastocyanin-like domains lie at 53–165, 229–295, and 424–536; these read KAGQ…IEDD, GWLR…AFDL, and FHNA…GFTV. Positions 101, 103, 141, and 143 each coordinate Cu cation. Residues H463, H466, H468, H519, C520, H521, and H525 each coordinate Cu cation.

The protein belongs to the multicopper oxidase family. As to quaternary structure, monomer. It depends on Cu cation as a cofactor. Predicted to be exported by the Tat system. The position of the signal peptide cleavage has not been experimentally proven.

The protein resides in the periplasm. It carries out the reaction 4 Cu(+) + O2 + 4 H(+) = 4 Cu(2+) + 2 H2O. In terms of biological role, multicopper oxidase involved in copper homeostasis and copper tolerance under both aerobic and anaerobic conditions. Is responsible for the oxidation of Cu(+) to the less harmful Cu(2+) in the periplasm, thereby preventing Cu(+) from entering the cytoplasm. The chain is Multicopper oxidase CueO (cueO) from Salmonella typhimurium (strain LT2 / SGSC1412 / ATCC 700720).